The primary structure comprises 178 residues: ATP-dependent protease subunit HslV (178 aa).

The active site involves threonine 7. Positions 162, 165, and 168 each coordinate Na(+).

This sequence belongs to the peptidase T1B family. HslV subfamily. In terms of assembly, a double ring-shaped homohexamer of HslV is capped on each side by a ring-shaped HslU homohexamer. The assembly of the HslU/HslV complex is dependent on binding of ATP.

It localises to the cytoplasm. The enzyme catalyses ATP-dependent cleavage of peptide bonds with broad specificity.. With respect to regulation, allosterically activated by HslU binding. Its function is as follows. Protease subunit of a proteasome-like degradation complex believed to be a general protein degrading machinery. The sequence is that of ATP-dependent protease subunit HslV from Cupriavidus metallidurans (strain ATCC 43123 / DSM 2839 / NBRC 102507 / CH34) (Ralstonia metallidurans).